A 63-amino-acid polypeptide reads, in one-letter code: uncharacterized protein (63 aa).

A signal peptide spans 1 to 21 (MNRALILTFVLFFALFAISSA).

This is an uncharacterized protein from Dictyostelium discoideum (Social amoeba).